Reading from the N-terminus, the 245-residue chain is Tegument protein UL51 homolog (245 aa).

A lipid anchor (S-palmitoyl cysteine; by host) is attached at C10. Residues 225–245 (PVKSNLKSKHKPKRKASLVAV) form a disordered region. Residues 230 to 245 (LKSKHKPKRKASLVAV) are compositionally biased toward basic residues.

The protein belongs to the herpesviridae UL51 family. In terms of assembly, oligomerizes. Interacts with ORF55; this interaction mediates ORF55 incorporation to virions. Phosphorylated. Post-translationally, palmitoylation is necessary for Golgi localization.

It localises to the virion tegument. The protein resides in the host cytoplasm. It is found in the host Golgi apparatus. In terms of biological role, plays several roles during the time course of infection, including egress of virus particles from the perinuclear space and secondary envelopment of cytoplasmic capsids that bud into specific trans-Golgi network (TGN)-derived membranes. This is Tegument protein UL51 homolog from Equine herpesvirus 1 (strain Ab4p) (EHV-1).